We begin with the raw amino-acid sequence, 944 residues long: MSGMVDLKEFLAELGKTQKELKNVIEQAKDIGLELKTNSKMTPEQAGKLYKYIVDGIKEQIQANQPAKNPEQDNKDDLNMVQTPKPLNKKVSKTPKKEETKSQPKPKKTKEKKKEAPTPIAKKKGGIEIVNTFENQTPPTENTPKVVSHSQIEKAKQKLQEIQKSREALNKLTQSNANNASNTNNAKKEISEVKKQEQEIKRHENIKRRTGFRVIKRNDETENESENSVTESKKPTQSVAAIFEDIKKEWQEKDKQEAKKAKKPSKPKATPTAKNNKSHKIDFSDARDFKGNDIYDDETDEILLFDLHEQDNLNKEEEEKEIRQNINDRVRVQRKNPWMNESGIKRQSKKKRAFRNDNSQKVIQSTIAIPEEVRVYEFAQKANLNLADVIKTLFNLGLMVTKNDFLDKDSIEILAEEFHLEISVQNTLEEFEVEEVLEGVKKERPPVVTIMGHVDHGKTSLLDKIRDKRVAHTEAGGITQHIGAYMVEKNDKWVSFIDTPGHEAFSQMRNRGAQVTDIAVIVIAADDGVKQQTIEALEHAKAANVPVIFAMNKMDKPNVNPDKLKAECAELGYNPVDWGGEHEFIPVSAKTGDGIDNLLETILIQADIMELKAIEEGSARAVVLEGSVEKGRGAVATVIVQSGTLSVGDSFFAETAFGKVRTMTDDQGKSIQNLKPSMVALITGLSEVPPAGSVLIGVENDSIARLQAQKRATYLRQKALSKSTKVSFDELSEMVANKELKNIPVVIKADTQGSLEAIKNSLLELNNEEVAIQVIHSGVGGITENDLSLVSSSDHAVILGFNIRPTGNVKNKAKEYNVSIKTYTVIYALIEEMRSLLLGLMSPIIEEEHTGQAEVRETFNIPKVGTIAGCVVSDGVIARGIKARLIRDGVVVHTGEILSLKRFKDDVKEVSKGYECGIMLDNYNEIKVGDVFETYKEIHKKRTL.

The interval 61-281 (IQANQPAKNP…TAKNNKSHKI (221 aa)) is disordered. The span at 132-150 (TFENQTPPTENTPKVVSHS) shows a compositional bias: polar residues. The span at 151–169 (QIEKAKQKLQEIQKSREAL) shows a compositional bias: basic and acidic residues. Residues 175-185 (SNANNASNTNN) are compositionally biased toward low complexity. Residues 186-203 (AKKEISEVKKQEQEIKRH) are compositionally biased toward basic and acidic residues. Residues 204–215 (ENIKRRTGFRVI) show a composition bias toward basic residues. A compositionally biased stretch (basic and acidic residues) spans 244 to 259 (EDIKKEWQEKDKQEAK). Residues 443 to 612 (ERPPVVTIMG…LIQADIMELK (170 aa)) enclose the tr-type G domain. Residues 452-459 (GHVDHGKT) form a G1 region. 452 to 459 (GHVDHGKT) contacts GTP. Residues 477-481 (GITQH) form a G2 region. A G3 region spans residues 498–501 (DTPG). GTP-binding positions include 498 to 502 (DTPGH) and 552 to 555 (NKMD). Positions 552–555 (NKMD) are G4. Residues 588–590 (SAK) are G5.

It belongs to the TRAFAC class translation factor GTPase superfamily. Classic translation factor GTPase family. IF-2 subfamily.

Its subcellular location is the cytoplasm. Functionally, one of the essential components for the initiation of protein synthesis. Protects formylmethionyl-tRNA from spontaneous hydrolysis and promotes its binding to the 30S ribosomal subunits. Also involved in the hydrolysis of GTP during the formation of the 70S ribosomal complex. This is Translation initiation factor IF-2 from Helicobacter pylori (strain HPAG1).